A 300-amino-acid chain; its full sequence is Zinc finger CCCH domain-containing protein 14 (300 aa).

The segment at 1–38 (MEVGGRKRGKPDGANGAGGKRARESESFQTGVGSKSKP) is disordered. 2 C3H1-type zinc fingers span residues 33 to 61 (GSKS…HHFP) and 99 to 127 (TVKT…HGER). The KH domain maps to 170–234 (SATAKISVDA…DQIKNASAMV (65 aa)). The interval 243 to 262 (GGAPPQGKKPVGGSHRGGGP) is disordered. The C3H1-type 3 zinc finger occupies 265 to 292 (NFKTKLCENFTKGSCTFGDRCHFAHGEN).

This is Zinc finger CCCH domain-containing protein 14 from Oryza sativa subsp. japonica (Rice).